Here is a 359-residue protein sequence, read N- to C-terminus: 4-hydroxy-3-methylbut-2-en-1-yl diphosphate synthase (flavodoxin) (359 aa).

[4Fe-4S] cluster contacts are provided by Cys264, Cys267, Cys299, and Glu306.

This sequence belongs to the IspG family. It depends on [4Fe-4S] cluster as a cofactor.

It catalyses the reaction (2E)-4-hydroxy-3-methylbut-2-enyl diphosphate + oxidized [flavodoxin] + H2O + 2 H(+) = 2-C-methyl-D-erythritol 2,4-cyclic diphosphate + reduced [flavodoxin]. It functions in the pathway isoprenoid biosynthesis; isopentenyl diphosphate biosynthesis via DXP pathway; isopentenyl diphosphate from 1-deoxy-D-xylulose 5-phosphate: step 5/6. In terms of biological role, converts 2C-methyl-D-erythritol 2,4-cyclodiphosphate (ME-2,4cPP) into 1-hydroxy-2-methyl-2-(E)-butenyl 4-diphosphate. The sequence is that of 4-hydroxy-3-methylbut-2-en-1-yl diphosphate synthase (flavodoxin) from Helicobacter pylori (strain Shi470).